The primary structure comprises 114 residues: Protein Tat (114 aa).

The tract at residues 1–24 (MDPVDPEVPPWHHPGSQPQIPCNN) is interaction with human CREBBP. The tract at residues 1-48 (MDPVDPEVPPWHHPGSQPQIPCNNCYCKRCCYHCYVCFVRKGLGISYG) is transactivation. Zn(2+) contacts are provided by C22, C25, and C27. The interval 22 to 37 (CNNCYCKRCCYHCYVC) is cysteine-rich. K28 carries the N6-acetyllysine; by host PCAF modification. Residues C30, H33, C34, and C37 each coordinate Zn(2+). A core region spans residues 38-48 (FVRKGLGISYG). The segment at 48–114 (GRKKRGRPAA…CHCCTRTSEQ (67 aa)) is disordered. The Nuclear localization signal, RNA-binding (TAR), and protein transduction motif lies at 49-56 (RKKRGRPA). The tract at residues 49–84 (RKKRGRPAAASHPDHKDPVPKQSPTITKRKQERQEE) is interaction with the host capping enzyme RNGTT. N6-acetyllysine; by host EP300 and GCN5L2 occurs at positions 50 and 51. Position 52 is an asymmetric dimethylarginine; by host PRMT6 (R52). K69 is covalently cross-linked (Glycyl lysine isopeptide (Lys-Gly) (interchain with G-Cter in ubiquitin)).

It belongs to the lentiviruses Tat family. Interacts with host CCNT1. Associates with the P-TEFb complex composed at least of Tat, P-TEFb (CDK9 and CCNT1), TAR RNA, RNA Pol II. Recruits the HATs CREBBP, TAF1/TFIID, EP300, PCAF and GCN5L2. Interacts with host KAT5/Tip60; this interaction targets the latter to degradation. Interacts with the host deacetylase SIRT1. Interacts with host capping enzyme RNGTT; this interaction stimulates RNGTT. Binds to host KDR, and to the host integrins ITGAV/ITGB3 and ITGA5/ITGB1. Interacts with host KPNB1/importin beta-1 without previous binding to KPNA1/importin alpha-1. Interacts with EIF2AK2. Interacts with host nucleosome assembly protein NAP1L1; this interaction may be required for the transport of Tat within the nucleus, since the two proteins interact at the nuclear rim. Interacts with host C1QBP/SF2P32; this interaction involves lysine-acetylated Tat. Interacts with the host chemokine receptors CCR2, CCR3 and CXCR4. Interacts with host DPP4/CD26; this interaction may trigger an anti-proliferative effect. Interacts with host LDLR. Interacts with the host extracellular matrix metalloproteinase MMP1. Interacts with host PRMT6; this interaction mediates Tat's methylation. Interacts with, and is ubiquitinated by MDM2/Hdm2. Interacts with host PSMC3 and HTATIP2. Interacts with STAB1; this interaction may overcome SATB1-mediated repression of IL2 and IL2RA (interleukin) in T cells by binding to the same domain than HDAC1. Interacts (when acetylated) with human CDK13, thereby increasing HIV-1 mRNA splicing and promoting the production of the doubly spliced HIV-1 protein Nef. Interacts with host TBP; this interaction modulates the activity of transcriptional pre-initiation complex. Interacts with host RELA. Interacts with host PLSCR1; this interaction negatively regulates Tat transactivation activity by altering its subcellular distribution. Asymmetrical arginine methylation by host PRMT6 seems to diminish the transactivation capacity of Tat and affects the interaction with host CCNT1. In terms of processing, acetylation by EP300, CREBBP, GCN5L2/GCN5 and PCAF regulates the transactivation activity of Tat. EP300-mediated acetylation of Lys-50 promotes dissociation of Tat from the TAR RNA through the competitive binding to PCAF's bromodomain. In addition, the non-acetylated Tat's N-terminus can also interact with PCAF. PCAF-mediated acetylation of Lys-28 enhances Tat's binding to CCNT1. Lys-50 is deacetylated by SIRT1. Post-translationally, polyubiquitination by host MDM2 does not target Tat to degradation, but activates its transactivation function and fosters interaction with CCNT1 and TAR RNA. Phosphorylated by EIF2AK2 on serine and threonine residues adjacent to the basic region important for TAR RNA binding and function. Phosphorylation of Tat by EIF2AK2 is dependent on the prior activation of EIF2AK2 by dsRNA.

The protein resides in the host nucleus. It localises to the host nucleolus. The protein localises to the host cytoplasm. Its subcellular location is the secreted. Functionally, transcriptional activator that increases RNA Pol II processivity, thereby increasing the level of full-length viral transcripts. Recognizes a hairpin structure at the 5'-LTR of the nascent viral mRNAs referred to as the transactivation responsive RNA element (TAR) and recruits the cyclin T1-CDK9 complex (P-TEFb complex) that will in turn hyperphosphorylate the RNA polymerase II to allow efficient elongation. The CDK9 component of P-TEFb and other Tat-activated kinases hyperphosphorylate the C-terminus of RNA Pol II that becomes stabilized and much more processive. Other factors such as HTATSF1/Tat-SF1, SUPT5H/SPT5, and HTATIP2 are also important for Tat's function. Besides its effect on RNA Pol II processivity, Tat induces chromatin remodeling of proviral genes by recruiting the histone acetyltransferases (HATs) CREBBP, EP300 and PCAF to the chromatin. This also contributes to the increase in proviral transcription rate, especially when the provirus integrates in transcriptionally silent region of the host genome. To ensure maximal activation of the LTR, Tat mediates nuclear translocation of NF-kappa-B by interacting with host RELA. Through its interaction with host TBP, Tat may also modulate transcription initiation. Tat can reactivate a latently infected cell by penetrating in it and transactivating its LTR promoter. In the cytoplasm, Tat is thought to act as a translational activator of HIV-1 mRNAs. Its function is as follows. Extracellular circulating Tat can be endocytosed by surrounding uninfected cells via the binding to several surface receptors such as CD26, CXCR4, heparan sulfate proteoglycans (HSPG) or LDLR. Neurons are rarely infected, but they internalize Tat via their LDLR. Through its interaction with nuclear HATs, Tat is potentially able to control the acetylation-dependent cellular gene expression. Modulates the expression of many cellular genes involved in cell survival, proliferation or in coding for cytokines or cytokine receptors. Tat plays a role in T-cell and neurons apoptosis. Tat induced neurotoxicity and apoptosis probably contribute to neuroAIDS. Circulating Tat also acts as a chemokine-like and/or growth factor-like molecule that binds to specific receptors on the surface of the cells, affecting many cellular pathways. In the vascular system, Tat binds to ITGAV/ITGB3 and ITGA5/ITGB1 integrins dimers at the surface of endothelial cells and competes with bFGF for heparin-binding sites, leading to an excess of soluble bFGF. The sequence is that of Protein Tat from Homo sapiens (Human).